Here is a 749-residue protein sequence, read N- to C-terminus: Transcription factor RFX3 (749 aa).

Positions 183 to 258 form a DNA-binding region, RFX-type winged-helix; it reads HLQWLLDNYE…YHYYGIRVKP (76 aa). Residues 663–699 form a disordered region; the sequence is VSPGNLDKDEGSEVESEMDEELDDSSEPQAKREKTEL. The segment covering 674 to 688 has biased composition (acidic residues); it reads SEVESEMDEELDDSS.

The protein belongs to the RFX family. As to quaternary structure, heterodimer; heterodimerizes with RFX1 and RFX2, and RFX6.

It is found in the nucleus. In terms of biological role, transcription factor required for ciliogenesis and islet cell differentiation during endocrine pancreas development. Essential for the differentiation of nodal monocilia and left-right asymmetry specification during embryogenesis. Required for the biogenesis of motile cilia by governing growth and beating efficiency of motile cells. Also required for ciliated ependymal cell differentiation. Regulates the expression of genes involved in ciliary assembly (DYNC2LI1, FOXJ1 and BBS4) and genes involved in ciliary motility (DNAH11, DNAH9 and DNAH5). Together with RFX6, participates in the differentiation of 4 of the 5 islet cell types during endocrine pancreas development, with the exception of pancreatic PP (polypeptide-producing) cells. Regulates transcription by forming a heterodimer with another RFX protein and binding to the X-box in the promoter of target genes. Represses transcription of MAP1A in non-neuronal cells but not in neuronal cells. This chain is Transcription factor RFX3 (RFX3), found in Macaca fascicularis (Crab-eating macaque).